Consider the following 721-residue polypeptide: Polyribonucleotide nucleotidyltransferase (721 aa).

Mg(2+)-binding residues include D495 and D501. The region spanning 562–621 (PRLLSFRIDPELIGTVIGPGGRTIKGITERTNTKIDIEDGGIVTIASHDGAAAEEAQKII) is the KH domain. One can recognise an S1 motif domain in the interval 631-699 (GEVFSGSITR…NRGRINLTLR (69 aa)).

Belongs to the polyribonucleotide nucleotidyltransferase family. Requires Mg(2+) as cofactor.

The protein localises to the cytoplasm. The catalysed reaction is RNA(n+1) + phosphate = RNA(n) + a ribonucleoside 5'-diphosphate. In terms of biological role, involved in mRNA degradation. Catalyzes the phosphorolysis of single-stranded polyribonucleotides processively in the 3'- to 5'-direction. This chain is Polyribonucleotide nucleotidyltransferase, found in Synechococcus sp. (strain CC9605).